The sequence spans 276 residues: Aurora kinase C (276 aa).

Residues 16 to 266 (FEIGRPLGRG…LAQVLKHPWV (251 aa)) enclose the Protein kinase domain. Residues 22–30 (LGRGKFGRV) and Lys45 each bind ATP. Catalysis depends on Asp139, which acts as the Proton acceptor. Thr171 bears the Phosphothreonine; by PKA mark.

It belongs to the protein kinase superfamily. Ser/Thr protein kinase family. Aurora subfamily. In terms of assembly, component of the chromosomal passenger complex (CPC) composed of at least BIRC5/survivin, CDCA8/borealin, INCENP, AURKB or AURKC; predominantly independent AURKB- and AURKC-containing complexes exist; in the complex interacts directly with BIRC5/survivin and INCENP. Interacts with TACC1. In terms of tissue distribution, expressed only in testis.

The protein resides in the nucleus. The protein localises to the chromosome. It localises to the centromere. Its subcellular location is the cytoplasm. It is found in the cytoskeleton. The protein resides in the spindle. The enzyme catalyses L-seryl-[protein] + ATP = O-phospho-L-seryl-[protein] + ADP + H(+). It catalyses the reaction L-threonyl-[protein] + ATP = O-phospho-L-threonyl-[protein] + ADP + H(+). Okadaic acid, an inhibitor of protein phosphatase 1 (PP1), protein phosphatase 2A (PP2A) and protein phosphatase 5 (PP5), increases AURKC activity. AURKC is also stabilized through its interaction with INCENP, which also acts as an activator. Functionally, serine/threonine-protein kinase component of the chromosomal passenger complex (CPC), a complex that acts as a key regulator of mitosis. The CPC complex has essential functions at the centromere in ensuring correct chromosome alignment and segregation and is required for chromatin-induced microtubule stabilization and spindle assembly. Also plays a role in meiosis and more particularly in spermatogenesis. Has redundant cellular functions with AURKB and can rescue an AURKB knockdown. Like AURKB, AURKC phosphorylates histone H3 at 'Ser-10' and 'Ser-28'. AURKC phosphorylates the CPC complex subunits BIRC5/survivin and INCENP leading to increased AURKC activity. Phosphorylates TACC1, another protein involved in cell division, at 'Ser-228'. The chain is Aurora kinase C (Aurkc) from Mus musculus (Mouse).